The following is a 147-amino-acid chain: Large ribosomal subunit protein uL13 (147 aa).

The protein belongs to the universal ribosomal protein uL13 family. In terms of assembly, part of the 50S ribosomal subunit.

Its function is as follows. This protein is one of the early assembly proteins of the 50S ribosomal subunit, although it is not seen to bind rRNA by itself. It is important during the early stages of 50S assembly. The sequence is that of Large ribosomal subunit protein uL13 from Pseudothermotoga lettingae (strain ATCC BAA-301 / DSM 14385 / NBRC 107922 / TMO) (Thermotoga lettingae).